The primary structure comprises 282 residues: Biotin synthase (282 aa).

Residues Met1–Arg228 enclose the Radical SAM core domain. Positions 17, 21, and 24 each coordinate [4Fe-4S] cluster. [2Fe-2S] cluster contacts are provided by Cys61, Cys96, Cys154, and Arg221.

It belongs to the radical SAM superfamily. Biotin synthase family. As to quaternary structure, homodimer. The cofactor is [4Fe-4S] cluster. Requires [2Fe-2S] cluster as cofactor.

It carries out the reaction (4R,5S)-dethiobiotin + (sulfur carrier)-SH + 2 reduced [2Fe-2S]-[ferredoxin] + 2 S-adenosyl-L-methionine = (sulfur carrier)-H + biotin + 2 5'-deoxyadenosine + 2 L-methionine + 2 oxidized [2Fe-2S]-[ferredoxin]. It participates in cofactor biosynthesis; biotin biosynthesis; biotin from 7,8-diaminononanoate: step 2/2. In terms of biological role, catalyzes the conversion of dethiobiotin (DTB) to biotin by the insertion of a sulfur atom into dethiobiotin via a radical-based mechanism. The protein is Biotin synthase of Helicobacter acinonychis (strain Sheeba).